The primary structure comprises 214 residues: 3-demethoxyubiquinol 3-hydroxylase (214 aa).

The Fe cation site is built by glutamate 63, glutamate 93, histidine 96, glutamate 145, glutamate 177, and histidine 180.

This sequence belongs to the COQ7 family. Fe cation is required as a cofactor.

Its subcellular location is the cell membrane. The enzyme catalyses a 5-methoxy-2-methyl-3-(all-trans-polyprenyl)benzene-1,4-diol + AH2 + O2 = a 3-demethylubiquinol + A + H2O. Its pathway is cofactor biosynthesis; ubiquinone biosynthesis. Functionally, catalyzes the hydroxylation of 2-nonaprenyl-3-methyl-6-methoxy-1,4-benzoquinol during ubiquinone biosynthesis. The chain is 3-demethoxyubiquinol 3-hydroxylase from Nitrosococcus oceani (strain ATCC 19707 / BCRC 17464 / JCM 30415 / NCIMB 11848 / C-107).